The primary structure comprises 43 residues: Hemolysin H1U (43 aa).

Position 1 is an N-formylmethionine (Met-1).

The protein belongs to the staphylococcal hemolytic protein family.

It is found in the secreted. Virulence factor. Causes hemolysis of erythrocytes. Acts synergistically with beta-hemolysins from S.aureus ATCC 25923. Cytotoxic towards human dermal fibroblasts. The protein is Hemolysin H1U of Staphylococcus ureilyticus (Staphylococcus cohnii subsp. urealyticus).